Consider the following 261-residue polypeptide: Hydrolase in agr operon (261 aa).

The CN hydrolase domain occupies 1–239 (MKVQIYQLPI…ADILTVDLNL (239 aa)). The active-site Proton acceptor is the Glu41. Catalysis depends on Lys110, which acts as the Proton donor. The Nucleophile role is filled by Cys146.

Belongs to the carbon-nitrogen hydrolase superfamily. NIT1/NIT2 family.

In Staphylococcus aureus, this protein is Hydrolase in agr operon.